The following is a 607-amino-acid chain: Glycosyltransferase 25 family member (607 aa).

The signal sequence occupies residues 1 to 22 (MKPVSCVGLLVLLVGVLVTVKG). 4 N-linked (GlcNAc...) asparagine glycosylation sites follow: Asn226, Asn254, Asn514, and Asn565. The segment at 566–607 (DTSDSSAEKKGDKEQLSSKTLMDSTISRDEHELSVANRKSEL) is disordered. 2 stretches are compositionally biased toward basic and acidic residues: residues 571 to 581 (SAEKKGDKEQL) and 591 to 607 (ISRDEHELSVANRKSEL). The Prevents secretion from ER motif lies at 604–607 (KSEL).

It belongs to the glycosyltransferase 25 family.

Its subcellular location is the endoplasmic reticulum lumen. This chain is Glycosyltransferase 25 family member, found in Aedes aegypti (Yellowfever mosquito).